The primary structure comprises 353 residues: Protein CEPU-1 (353 aa).

Residues 1–28 form the signal peptide; sequence MAQAKMQHPVSWVIFAGMAALLLFQGVP. 3 consecutive Ig-like C2-type domains span residues 37–124, 134–216, and 220–314; these read PKAM…PKTS, PKIT…VKVT, and PPYI…ETTT. Residues N42, N68, and N150 are each glycosylated (N-linked (GlcNAc...) asparagine). C55 and C113 are oxidised to a cystine. 2 disulfides stabilise this stretch: C155/C199 and C241/C293. N282, N290, and N303 each carry an N-linked (GlcNAc...) asparagine glycan. A lipid anchor (GPI-anchor amidated serine) is attached at S330. A propeptide spans 331–353 (removed in mature form); that stretch reads GAWRRGSCAWLLALPLAQLARQF.

The protein belongs to the immunoglobulin superfamily. IgLON family. In terms of assembly, interacts with NEGR1. As to expression, found on the dendrites, somata and axons of developing Purkinje cells. Undetectable on other neurons like Golgi or granule cells.

Its subcellular location is the cell membrane. It may be a cellular address molecule specific to Purkinje cells. It may represent a receptor or a subunit of a receptor complex. This Gallus gallus (Chicken) protein is Protein CEPU-1.